The primary structure comprises 220 residues: Redox-sensing transcriptional repressor Rex (220 aa).

The segment at residues 25–64 (WYLSNVKLLKQRGERFVSSTQISKEINIDASQIAKDLSYV) is a DNA-binding region (H-T-H motif). 99–104 (GVGSLG) contacts NAD(+).

Belongs to the transcriptional regulatory Rex family. Homodimer.

Its subcellular location is the cytoplasm. Its function is as follows. Modulates transcription in response to changes in cellular NADH/NAD(+) redox state. This Bacteroides thetaiotaomicron (strain ATCC 29148 / DSM 2079 / JCM 5827 / CCUG 10774 / NCTC 10582 / VPI-5482 / E50) protein is Redox-sensing transcriptional repressor Rex.